The primary structure comprises 156 residues: 6,7-dimethyl-8-ribityllumazine synthase (156 aa).

Residues Phe-28, 62 to 64, and 86 to 88 contribute to the 5-amino-6-(D-ribitylamino)uracil site; these read ALE and AVI. Position 91–92 (91–92) interacts with (2S)-2-hydroxy-3-oxobutyl phosphate; it reads ET. Residue His-94 is the Proton donor of the active site. Asn-119 serves as a coordination point for 5-amino-6-(D-ribitylamino)uracil. Residue Arg-133 participates in (2S)-2-hydroxy-3-oxobutyl phosphate binding.

Belongs to the DMRL synthase family.

The enzyme catalyses (2S)-2-hydroxy-3-oxobutyl phosphate + 5-amino-6-(D-ribitylamino)uracil = 6,7-dimethyl-8-(1-D-ribityl)lumazine + phosphate + 2 H2O + H(+). It participates in cofactor biosynthesis; riboflavin biosynthesis; riboflavin from 2-hydroxy-3-oxobutyl phosphate and 5-amino-6-(D-ribitylamino)uracil: step 1/2. In terms of biological role, catalyzes the formation of 6,7-dimethyl-8-ribityllumazine by condensation of 5-amino-6-(D-ribitylamino)uracil with 3,4-dihydroxy-2-butanone 4-phosphate. This is the penultimate step in the biosynthesis of riboflavin. The polypeptide is 6,7-dimethyl-8-ribityllumazine synthase (Azoarcus sp. (strain BH72)).